The sequence spans 311 residues: UDP-N-acetylenolpyruvoylglucosamine reductase (311 aa).

Residues 28–197 form the FAD-binding PCMH-type domain; sequence KIGGNARWLV…VSARFHLARG (170 aa). R177 is a catalytic residue. Catalysis depends on S226, which acts as the Proton donor. The active site involves E296.

The protein belongs to the MurB family. The cofactor is FAD.

It localises to the cytoplasm. The enzyme catalyses UDP-N-acetyl-alpha-D-muramate + NADP(+) = UDP-N-acetyl-3-O-(1-carboxyvinyl)-alpha-D-glucosamine + NADPH + H(+). It participates in cell wall biogenesis; peptidoglycan biosynthesis. In terms of biological role, cell wall formation. In Magnetococcus marinus (strain ATCC BAA-1437 / JCM 17883 / MC-1), this protein is UDP-N-acetylenolpyruvoylglucosamine reductase.